The chain runs to 81 residues: Small ribosomal subunit protein bS16 (81 aa).

It belongs to the bacterial ribosomal protein bS16 family.

The polypeptide is Small ribosomal subunit protein bS16 (Neisseria gonorrhoeae (strain ATCC 700825 / FA 1090)).